Consider the following 626-residue polypeptide: Mini-chromosome maintenance complex-binding protein (626 aa).

Disordered regions lie at residues 152 to 216 (STSY…LDLN) and 265 to 287 (PSSL…AHDP). Residues 177–196 (KQREPHTEPHGNGDSKRQET) are compositionally biased toward basic and acidic residues. The span at 197-210 (EAPSSQTTAPSDCS) shows a compositional bias: polar residues.

It belongs to the MCMBP family. Interacts with the mcm complex: associates with the mcm3-7 complex which lacks mcm2, while it does not interact with the mcm complex when mcm2 is present (mcm2-7 complex).

The protein localises to the nucleus. In terms of biological role, associated component of the mcm complex that acts as a regulator of DNA replication. Binds to the MCM complex during late S phase and promotes the disassembly of the mcm complex from chromatin, thereby acting as a key regulator of pre-replication complex (pre-RC) unloading from replicated DNA. Can dissociate the mcm complex without addition of ATP; probably acts by destabilizing interactions of each individual subunits of the mcm complex. Required for sister chromatid cohesion. The sequence is that of Mini-chromosome maintenance complex-binding protein (mcmbp) from Salmo salar (Atlantic salmon).